We begin with the raw amino-acid sequence, 247 residues long: Mannose-P-dolichol utilization defect 1 protein (247 aa).

An N-acetylalanine modification is found at Ala2. Transmembrane regions (helical) follow at residues 37 to 57 (CLKI…SLLV), 74 to 94 (LSLQ…VYSI), 100 to 120 (FSSW…CFLV), 128 to 145 (VKGV…LVLL), 151 to 171 (LTVV…GRLL), 185 to 205 (LSAI…FTSI), and 213 to 233 (MAGT…QLLF). The region spanning 39 to 105 (KILLSKGLGL…NNFPFSSWGE (67 aa)) is the PQ-loop 1 domain. Positions 159–216 (ASNVPAVVVGRLLQAATNYHNGHTGQLSAITVFLLFGGSLARIFTSIQETGDPLMAGT) constitute a PQ-loop 2 domain.

It belongs to the MPDU1 (TC 2.A.43.3) family.

It is found in the membrane. Required for normal utilization of mannose-dolichol phosphate (Dol-P-Man) in the synthesis of N-linked and O-linked oligosaccharides and GPI anchors. The protein is Mannose-P-dolichol utilization defect 1 protein (MPDU1) of Homo sapiens (Human).